The primary structure comprises 223 residues: MASSQQAVRETGRGRASSSSAGGRKVTFGYHLVEGKTPHGMEDLHVAEFRRLDDGNEDGGDGGSTAVTAILINGETLAVANVGDSRAVAFDVRAGRAQQLSVDHEPLRERDAIEHCGGFVTEIHGDVPRVDAQLATSRAFGDRQIKEHISSDPNVTIEDVGGRRRRWWHGARRPRQRRGVEECFLQRLAEYAICIHGASMEHRNFHVHSSHVHYFEIPPFKEV.

Positions Met-1 to Gly-22 are disordered. One can recognise a PPM-type phosphatase domain in the interval Met-1 to Val-212.

It belongs to the PP2C family.

The catalysed reaction is O-phospho-L-seryl-[protein] + H2O = L-seryl-[protein] + phosphate. The enzyme catalyses O-phospho-L-threonyl-[protein] + H2O = L-threonyl-[protein] + phosphate. The polypeptide is Putative protein phosphatase 2C 63 (Oryza sativa subsp. japonica (Rice)).